We begin with the raw amino-acid sequence, 85 residues long: Beta-insect depressant toxin Lqh-dprIT3c (85 aa).

A signal peptide spans 1-21; the sequence is MKLLLLLTISASMLIEGLVNA. Positions 22 to 82 constitute an LCN-type CS-alpha/beta domain; that stretch reads DGYIRGGDGC…EWDYETNTCG (61 aa). 4 disulfides stabilise this stretch: C31/C81, C35/C56, C42/C63, and C46/C65. G82 carries the glycine amide modification.

It belongs to the long (4 C-C) scorpion toxin superfamily. Sodium channel inhibitor family. Beta subfamily. In terms of tissue distribution, expressed by the venom gland.

It localises to the secreted. Functionally, depressant insect beta-toxins cause a transient contraction paralysis followed by a slow flaccid paralysis. They bind voltage-independently at site-4 of sodium channels (Nav) and block action potentials, primarily by depolarizing the axonal membrane and suppressing the sodium current. This depressant toxin is active only on insects. It is found in a relatively small amount in the venom, and its activity on insects is 10-fold higher compared to other known depressant toxins. The polypeptide is Beta-insect depressant toxin Lqh-dprIT3c (Leiurus hebraeus (Hebrew deathstalker scorpion)).